The primary structure comprises 464 residues: D-inositol 3-phosphate glycosyltransferase (464 aa).

A compositionally biased stretch (basic and acidic residues) spans 1 to 20 (MEGAPRRPDRHARSEEERHV). The interval 1–44 (MEGAPRRPDRHARSEEERHVSQYASRLGRRSPAAPTRRRMLRKP) is disordered. 1D-myo-inositol 3-phosphate is bound at residue His53. UDP-N-acetyl-alpha-D-glucosamine is bound by residues 59–60 (QP) and Gly67. 1D-myo-inositol 3-phosphate is bound by residues 64-69 (DAGGMN), Lys122, Tyr155, Thr179, and Arg199. UDP-N-acetyl-alpha-D-glucosamine is bound by residues Arg274, Lys279, and Val340. Phe349, Arg350, and Ala352 together coordinate Mg(2+). Positions 362 and 370 each coordinate UDP-N-acetyl-alpha-D-glucosamine. Mg(2+) is bound at residue Thr376.

This sequence belongs to the glycosyltransferase group 1 family. MshA subfamily. As to quaternary structure, homodimer.

The enzyme catalyses 1D-myo-inositol 3-phosphate + UDP-N-acetyl-alpha-D-glucosamine = 1D-myo-inositol 2-acetamido-2-deoxy-alpha-D-glucopyranoside 3-phosphate + UDP + H(+). Its function is as follows. Catalyzes the transfer of a N-acetyl-glucosamine moiety to 1D-myo-inositol 3-phosphate to produce 1D-myo-inositol 2-acetamido-2-deoxy-glucopyranoside 3-phosphate in the mycothiol biosynthesis pathway. This is D-inositol 3-phosphate glycosyltransferase from Streptomyces avermitilis (strain ATCC 31267 / DSM 46492 / JCM 5070 / NBRC 14893 / NCIMB 12804 / NRRL 8165 / MA-4680).